The primary structure comprises 274 residues: Penicillin-insensitive murein endopeptidase (274 aa).

The N-terminal stretch at 1–19 (MNKTAIALLALLASSASLA) is a signal peptide. 3 disulfides stabilise this stretch: cysteine 44/cysteine 265, cysteine 187/cysteine 235, and cysteine 216/cysteine 223. Histidine 110, histidine 113, aspartate 120, aspartate 147, histidine 150, and histidine 211 together coordinate Zn(2+). A disordered region spans residues 227 to 274 (PLPPPGDGCGAELQSWFEPPKPGTTKPEKKTPPPLPPSCQALLDEHVI).

This sequence belongs to the peptidase M74 family. As to quaternary structure, dimer. It depends on Zn(2+) as a cofactor.

The protein resides in the periplasm. Its function is as follows. Murein endopeptidase that cleaves the D-alanyl-meso-2,6-diamino-pimelyl amide bond that connects peptidoglycan strands. Likely plays a role in the removal of murein from the sacculus. The sequence is that of Penicillin-insensitive murein endopeptidase from Escherichia coli O17:K52:H18 (strain UMN026 / ExPEC).